The sequence spans 492 residues: Malonyl-CoA decarboxylase, mitochondrial (492 aa).

A mitochondrion-targeting transit peptide spans 1–38 (MRGLGPSLRARRLLPLRYPPRPPGPRGPRLCSGLTASA). Positions 39 to 189 (MDELLRRAVP…VLKSMLSEWF (151 aa)) are alpha-helical domain. K58 is subject to N6-acetyllysine. At K167 the chain carries N6-acetyllysine; alternate. At K167 the chain carries N6-succinyllysine; alternate. Residues 190–492 (SSGFLNLERV…VAQFQSNSKL (303 aa)) form a catalytic domain region. K210 carries the post-translational modification N6-acetyllysine. K221 carries the N6-succinyllysine modification. 298-304 (QGVELGT) contacts malonyl-CoA. K316 carries the post-translational modification N6-acetyllysine. Malonyl-CoA is bound at residue S328. The active-site Proton acceptor is S328. K385 carries the post-translational modification N6-acetyllysine; alternate. K385 is subject to N6-succinyllysine; alternate. K388 bears the N6-acetyllysine mark. A malonyl-CoA-binding site is contributed by H422. The Proton donor role is filled by H422. An N6-acetyllysine mark is found at K441 and K471. The Microbody targeting signal motif lies at 490 to 492 (SKL).

Homotetramer. Dimer of dimers. The two subunits within a dimer display conformational differences suggesting that at any given moment, only one of the two subunits is competent for malonyl-CoA binding and catalytic activity. Under oxidizing conditions, can form disulfide-linked homotetramers (in vitro). Associates with the peroxisomal targeting signal receptor PEX5. Acetylation at Lys-471 activates malonyl-CoA decarboxylase activity. Deacetylation at Lys-471 by SIRT4 represses activity, leading to promote lipogenesis. Post-translationally, interchain disulfide bonds may form in peroxisomes (Potential). Interchain disulfide bonds are not expected to form in the reducing environment of the cytoplasm and mitochondria. In terms of tissue distribution, expressed in liver, heart, skeletal muscles and adipose tissues (at protein level). Ubiquitous. Strongly expressed in liver, kidney, heart, skeletal muscle and adipose tissues. Weakly expressed in brain.

Its subcellular location is the cytoplasm. It is found in the mitochondrion matrix. The protein localises to the peroxisome. The protein resides in the peroxisome matrix. The catalysed reaction is malonyl-CoA + H(+) = acetyl-CoA + CO2. Its pathway is metabolic intermediate biosynthesis; acetyl-CoA biosynthesis; acetyl-CoA from malonyl-CoA: step 1/1. With respect to regulation, malonyl-CoA decarboxylase activity does not require any cofactors or divalent metal ions. Its function is as follows. Catalyzes the conversion of malonyl-CoA to acetyl-CoA. In the fatty acid biosynthesis MCD selectively removes malonyl-CoA and thus assures that methyl-malonyl-CoA is the only chain elongating substrate for fatty acid synthase and that fatty acids with multiple methyl side chains are produced. In peroxisomes it may be involved in degrading intraperoxisomal malonyl-CoA, which is generated by the peroxisomal beta-oxidation of odd chain-length dicarboxylic fatty acids. Plays a role in the metabolic balance between glucose and lipid oxidation in muscle independent of alterations in insulin signaling. May play a role in controlling the extent of ischemic injury by promoting glucose oxidation. This is Malonyl-CoA decarboxylase, mitochondrial from Rattus norvegicus (Rat).